A 310-amino-acid polypeptide reads, in one-letter code: Olfactory receptor 5P55 (310 aa).

The Extracellular portion of the chain corresponds to 1 to 25 (METQNHTTVTEFILLGLTESSTLRV). Asparagine 5 carries an N-linked (GlcNAc...) asparagine glycan. Residues 26–46 (ILFMVFLGIYTVTLVGNFSII) form a helical membrane-spanning segment. The Cytoplasmic segment spans residues 47-54 (SLIRSCPQ). A helical membrane pass occupies residues 55–75 (LHTPMYLFLSHLAFVDIGFST). Residues 76–99 (SITPTMFKGFLGNRLVLSVAACIA) are Extracellular-facing. An intrachain disulfide couples cysteine 97 to cysteine 189. The chain crosses the membrane as a helical span at residues 100 to 120 (QFCITVTFGTVECFLLAVMAY). The Cytoplasmic portion of the chain corresponds to 121–133 (DRYVAICSPLLYS). Residues 134 to 154 (THMSPRICFLLVGASYVGGCV) form a helical membrane-spanning segment. The Extracellular portion of the chain corresponds to 155-196 (NSGAFTSCLSILSFCGPNQIDHFFCDFPAVLKLSCSDVSIIG). The helical transmembrane segment at 197-217 (IIPSISAGSIIVITVFVIAVS) threads the bilayer. The Cytoplasmic portion of the chain corresponds to 218-237 (YAYILITILKMRSTEGRQKA). Residues 238-258 (FSTCTSHLTAVTLYYGTITFI) traverse the membrane as a helical segment. The Extracellular portion of the chain corresponds to 259 to 271 (YVMPKSNYSTAQN). A glycan (N-linked (GlcNAc...) asparagine) is linked at asparagine 265. The helical transmembrane segment at 272–292 (KILSVFYTVVIPMLNPLIYSL) threads the bilayer. Residues 293–310 (RNRDVKEALRKAIIRIFP) lie on the Cytoplasmic side of the membrane.

It belongs to the G-protein coupled receptor 1 family.

It is found in the cell membrane. Potential odorant receptor. This is Olfactory receptor 5P55 from Mus musculus (Mouse).